The chain runs to 123 residues: Nitrogenase-stabilizing/protective protein NifW (123 aa).

Belongs to the NifW family. In terms of assembly, homotrimer; associates with NifD.

May protect the nitrogenase Fe-Mo protein from oxidative damage. In Rhodopseudomonas palustris (strain HaA2), this protein is Nitrogenase-stabilizing/protective protein NifW.